The following is a 272-amino-acid chain: Shikimate dehydrogenase (NADP(+)) (272 aa).

Residues 14–16 (SKS) and threonine 61 contribute to the shikimate site. The active-site Proton acceptor is lysine 65. Glutamate 77 is an NADP(+) binding site. 2 residues coordinate shikimate: asparagine 86 and aspartate 102. Residues 126 to 130 (GAGGA), 149 to 154 (NRTVSR), and methionine 213 each bind NADP(+). Residue tyrosine 215 coordinates shikimate. Position 237 (glycine 237) interacts with NADP(+).

Belongs to the shikimate dehydrogenase family. In terms of assembly, homodimer.

The catalysed reaction is shikimate + NADP(+) = 3-dehydroshikimate + NADPH + H(+). It participates in metabolic intermediate biosynthesis; chorismate biosynthesis; chorismate from D-erythrose 4-phosphate and phosphoenolpyruvate: step 4/7. Functionally, involved in the biosynthesis of the chorismate, which leads to the biosynthesis of aromatic amino acids. Catalyzes the reversible NADPH linked reduction of 3-dehydroshikimate (DHSA) to yield shikimate (SA). This Shigella flexneri serotype 5b (strain 8401) protein is Shikimate dehydrogenase (NADP(+)).